The chain runs to 548 residues: Folylpolyglutamate synthase (548 aa).

Gly130–Ser133 serves as a coordination point for ATP. Positions 157, 234, and 262 each coordinate Mg(2+). 2 residues coordinate ATP: Arg382 and Asp396.

The protein belongs to the folylpolyglutamate synthase family. The cofactor is a monovalent cation.

The protein resides in the mitochondrion inner membrane. The protein localises to the mitochondrion matrix. It is found in the cytoplasm. The enzyme catalyses (6S)-5,6,7,8-tetrahydrofolyl-(gamma-L-Glu)(n) + L-glutamate + ATP = (6S)-5,6,7,8-tetrahydrofolyl-(gamma-L-Glu)(n+1) + ADP + phosphate + H(+). It functions in the pathway cofactor biosynthesis; tetrahydrofolylpolyglutamate biosynthesis. Catalyzes conversion of folates to polyglutamate derivatives allowing concentration of folate compounds in the cell and the intracellular retention of these cofactors, which are important substrates for most of the folate-dependent enzymes that are involved in one-carbon transfer reactions involved in purine, pyrimidine and amino acid synthesis. Required for methionine synthesis and maintenance of intact mitochondrial DNA. Involved in telomere maintenance. This is Folylpolyglutamate synthase from Saccharomyces cerevisiae (strain RM11-1a) (Baker's yeast).